A 79-amino-acid chain; its full sequence is Large ribosomal subunit protein bL31 (79 aa).

This sequence belongs to the bacterial ribosomal protein bL31 family. Type A subfamily. As to quaternary structure, part of the 50S ribosomal subunit.

Functionally, binds the 23S rRNA. The chain is Large ribosomal subunit protein bL31 from Synechococcus sp. (strain CC9902).